The sequence spans 203 residues: tRNA (pseudouridine(54)-N(1))-methyltransferase (203 aa).

L135 and G156 together coordinate S-adenosyl-L-methionine.

It belongs to the methyltransferase superfamily. TrmY family. As to quaternary structure, homodimer.

The protein localises to the cytoplasm. It carries out the reaction pseudouridine(54) in tRNA + S-adenosyl-L-methionine = N(1)-methylpseudouridine(54) in tRNA + S-adenosyl-L-homocysteine + H(+). In terms of biological role, specifically catalyzes the N1-methylation of pseudouridine at position 54 (Psi54) in tRNAs. This Thermococcus onnurineus (strain NA1) protein is tRNA (pseudouridine(54)-N(1))-methyltransferase.